The primary structure comprises 648 residues: Serine/threonine-protein phosphatase 1 regulatory subunit PIG1 (648 aa).

The span at 20-51 (STSSFVSSTTSNSFSPLEDSTSASSSTSSSSS) shows a compositional bias: low complexity. Positions 20 to 52 (STSSFVSSTTSNSFSPLEDSTSASSSTSSSSSG) are disordered. One can recognise a CBM21 domain in the interval 201–331 (HSLELSDPVS…NNDYKNYEIT (131 aa)). Positions 593–609 (RESSSPEISPLNTTTSL) are enriched in polar residues. The tract at residues 593-629 (RESSSPEISPLNTTTSLPFFPGDNMSDSSGEYEERTS) is disordered.

Functionally, regulates the activity of glycogen synthase. It is most probably a regulatory subunit for protein phosphatase type 1. The polypeptide is Serine/threonine-protein phosphatase 1 regulatory subunit PIG1 (PIG1) (Saccharomyces cerevisiae (strain ATCC 204508 / S288c) (Baker's yeast)).